A 225-amino-acid chain; its full sequence is Ribose-5-phosphate isomerase A (225 aa).

Residues Thr-33 to Thr-36, Asp-84 to Asp-87, and Lys-96 to Gly-99 contribute to the substrate site. Glu-105 serves as the catalytic Proton acceptor. Substrate is bound at residue Lys-123.

This sequence belongs to the ribose 5-phosphate isomerase family. In terms of assembly, homodimer.

It catalyses the reaction aldehydo-D-ribose 5-phosphate = D-ribulose 5-phosphate. Its pathway is carbohydrate degradation; pentose phosphate pathway; D-ribose 5-phosphate from D-ribulose 5-phosphate (non-oxidative stage): step 1/1. Its function is as follows. Catalyzes the reversible conversion of ribose-5-phosphate to ribulose 5-phosphate. This Halobacterium salinarum (strain ATCC 29341 / DSM 671 / R1) protein is Ribose-5-phosphate isomerase A.